The following is a 217-amino-acid chain: Adenylate kinase (217 aa).

11–16 (GSGKGT) is a binding site for ATP. An NMP region spans residues 31–61 (STGTMLRQALTRSTHKSYELHKNIMHTGDLV). AMP-binding positions include Thr-32, Arg-37, 59–61 (DLV), 87–90 (GFPR), and Gln-94. Residues 124–161 (GRRIHVGSGRTYHIKFNPPRNYGLDDITGEILTTRKDD) form an LID region. ATP is bound by residues Arg-125 and 134 to 135 (TY). AMP contacts are provided by Arg-158 and Arg-169. Position 202 (Arg-202) interacts with ATP.

Belongs to the adenylate kinase family. In terms of assembly, monomer.

Its subcellular location is the cytoplasm. The enzyme catalyses AMP + ATP = 2 ADP. Its pathway is purine metabolism; AMP biosynthesis via salvage pathway; AMP from ADP: step 1/1. Catalyzes the reversible transfer of the terminal phosphate group between ATP and AMP. Plays an important role in cellular energy homeostasis and in adenine nucleotide metabolism. The chain is Adenylate kinase from Blochmanniella pennsylvanica (strain BPEN).